A 147-amino-acid polypeptide reads, in one-letter code: Myoglobin (147 aa).

The region spanning 2–141 (ADFDAVLKCW…IIADLEANYK (140 aa)) is the Globin domain. His-60 is a nitrite binding site. His-60 is a binding site for O2. Residue His-89 coordinates heme b.

It belongs to the globin family. Monomeric.

The protein resides in the cytoplasm. Its subcellular location is the sarcoplasm. It carries out the reaction Fe(III)-heme b-[protein] + nitric oxide + H2O = Fe(II)-heme b-[protein] + nitrite + 2 H(+). It catalyses the reaction H2O2 + AH2 = A + 2 H2O. Functionally, monomeric heme protein which primary function is to store oxygen and facilitate its diffusion within muscle tissues. Reversibly binds oxygen through a pentacoordinated heme iron and enables its timely and efficient release as needed during periods of heightened demand. Depending on the oxidative conditions of tissues and cells, and in addition to its ability to bind oxygen, it also has a nitrite reductase activity whereby it regulates the production of bioactive nitric oxide. Under stress conditions, like hypoxia and anoxia, it also protects cells against reactive oxygen species thanks to its pseudoperoxidase activity. This chain is Myoglobin (mb), found in Thunnus alalunga (Albacore).